Here is a 780-residue protein sequence, read N- to C-terminus: Vacuolar protein sorting-associated protein 51 homolog (780 aa).

N-acetylalanine is present on Ala2. Disordered stretches follow at residues 270–292 (STLV…PAKI) and 615–651 (QGTF…SNSQ). The span at 273 to 284 (VEDDDSSNDTES) shows a compositional bias: acidic residues. Residues 626–639 (SNGSNTTTSSRSNT) show a composition bias toward low complexity.

It belongs to the VPS51 family. In terms of assembly, component of the Golgi-associated retrograde protein (GARP) complex, composed by VPS51, VPS52, VPS53 and VPS54. Component of the endosome-associated retrograde protein (EARP) complex, composed of VPS51, VPS52, VPS53 and VPS50. Interacts with VPS52. Expressed in primary and lateral roots, shoots of seedlings and flowers.

The protein localises to the golgi apparatus. It is found in the trans-Golgi network. Its subcellular location is the recycling endosome. The protein resides in the prevacuolar compartment. In terms of biological role, acts as a component of the GARP complex that is involved in retrograde transport from early and late endosomes to the trans-Golgi network (TGN). The GARP complex is required for the maintenance of protein retrieval from endosomes to the TGN, acid hydrolase sorting, lysosome function, endosomal cholesterol traffic and autophagy. VPS51 participates in retrograde transport of acid hydrolase receptors, likely by promoting tethering and SNARE-dependent fusion of endosome-derived carriers to the TGN. Acts as a component of the EARP complex that is involved in endocytic recycling. The EARP complex associates with Rab4-positive endosomes and promotes recycling of internalized transferrin receptor (TFRC) to the plasma membrane. Required for vacuolar targeting and cellular trafficking. Involved in the regulation of vascular tissue patterning, probably by regulating PIN1 expression pattern, thus modulating auxin flux. Important to prevent PIN1 accumulation within margin cells, possibly by targeting PIN1 to the lytic vacuole. Regulates PIN1 and ATHB8 expression pattern in secondary veins. The chain is Vacuolar protein sorting-associated protein 51 homolog from Arabidopsis thaliana (Mouse-ear cress).